The sequence spans 238 residues: LexA repressor (238 aa).

A DNA-binding region (H-T-H motif) is located at residues 26–46; sequence FDEMKDALDLASKSGIHRLIT. Residues Ser-158 and Lys-196 each act as for autocatalytic cleavage activity in the active site.

The protein belongs to the peptidase S24 family. As to quaternary structure, homodimer.

The catalysed reaction is Hydrolysis of Ala-|-Gly bond in repressor LexA.. In terms of biological role, represses a number of genes involved in the response to DNA damage (SOS response), including recA and lexA. In the presence of single-stranded DNA, RecA interacts with LexA causing an autocatalytic cleavage which disrupts the DNA-binding part of LexA, leading to derepression of the SOS regulon and eventually DNA repair. In Sinorhizobium medicae (strain WSM419) (Ensifer medicae), this protein is LexA repressor.